The primary structure comprises 64 residues: Conotoxin Am1.1 (64 aa).

The N-terminal stretch at M1–A22 is a signal peptide. Positions R23–K49 are excised as a propeptide. P60 carries the 4-hydroxyproline; partial; in major form modification.

Belongs to the conotoxin T superfamily. Post-translationally, contains 2 disulfide bonds. In terms of tissue distribution, expressed by the venom duct.

The protein resides in the secreted. Probable toxin that inhibits ion channels. This is Conotoxin Am1.1 from Conus amadis (Amadis cone).